Consider the following 130-residue polypeptide: Small ribosomal subunit protein uS9 (130 aa).

It belongs to the universal ribosomal protein uS9 family.

In Pseudomonas fluorescens (strain ATCC BAA-477 / NRRL B-23932 / Pf-5), this protein is Small ribosomal subunit protein uS9.